Consider the following 504-residue polypeptide: D-alanine--D-alanyl carrier protein ligase (504 aa).

An ATP-binding site is contributed by 152–153 (TS). D197 lines the D-alanine pocket. 292–297 (NTYGPT) is an ATP binding site. Residue V301 coordinates D-alanine. Residues D383, 394-397 (YNGR), and K492 contribute to the ATP site. Position 492 (K492) interacts with D-alanine.

The protein belongs to the ATP-dependent AMP-binding enzyme family. DltA subfamily.

It is found in the cytoplasm. The catalysed reaction is holo-[D-alanyl-carrier protein] + D-alanine + ATP = D-alanyl-[D-alanyl-carrier protein] + AMP + diphosphate. The protein operates within cell wall biogenesis; lipoteichoic acid biosynthesis. Its function is as follows. Catalyzes the first step in the D-alanylation of lipoteichoic acid (LTA), the activation of D-alanine and its transfer onto the D-alanyl carrier protein (Dcp) DltC. In an ATP-dependent two-step reaction, forms a high energy D-alanyl-AMP intermediate, followed by transfer of the D-alanyl residue as a thiol ester to the phosphopantheinyl prosthetic group of the Dcp. D-alanylation of LTA plays an important role in modulating the properties of the cell wall in Gram-positive bacteria, influencing the net charge of the cell wall. This Bacillus cytotoxicus (strain DSM 22905 / CIP 110041 / 391-98 / NVH 391-98) protein is D-alanine--D-alanyl carrier protein ligase.